The primary structure comprises 336 residues: tRNA N6-adenosine threonylcarbamoyltransferase (336 aa).

The Fe cation site is built by His-111 and His-115. Substrate is bound by residues 133-137, Asp-166, Gly-179, and Asn-276; that span reads LISGG. Residue Asp-301 participates in Fe cation binding.

It belongs to the KAE1 / TsaD family. Requires Fe(2+) as cofactor.

It localises to the cytoplasm. The enzyme catalyses L-threonylcarbamoyladenylate + adenosine(37) in tRNA = N(6)-L-threonylcarbamoyladenosine(37) in tRNA + AMP + H(+). Functionally, required for the formation of a threonylcarbamoyl group on adenosine at position 37 (t(6)A37) in tRNAs that read codons beginning with adenine. Is involved in the transfer of the threonylcarbamoyl moiety of threonylcarbamoyl-AMP (TC-AMP) to the N6 group of A37, together with TsaE and TsaB. TsaD likely plays a direct catalytic role in this reaction. This chain is tRNA N6-adenosine threonylcarbamoyltransferase, found in Wolbachia pipientis subsp. Culex pipiens (strain wPip).